A 1156-amino-acid polypeptide reads, in one-letter code: Nuclear pore-associated protein 1 (1156 aa).

Disordered regions lie at residues 1–60 (MGNL…RRPS), 155–204 (EGPR…FRCS), 219–266 (NSMS…PEPA), 481–515 (GGSYNSVVGAAPLTSDPPTPPSSTPSFKPPVTRES), 680–703 (TLVNSASTASSSKPPIETNAMHTT), 732–786 (NTQP…KTSL), 872–915 (STSF…SSFI), and 1026–1046 (APGPSSTSGELNIGQGQSGTP). Positions 50-59 (LFRRNARRRP) are enriched in basic residues. The span at 156–165 (GPRRVKKDED) shows a compositional bias: basic and acidic residues. 2 stretches are compositionally biased toward polar residues: residues 179–197 (PLSSGEASSTSRSQGTQGD) and 219–231 (NSMSEKAQASPAS). Polar residues-rich tracts occupy residues 680–692 (TLVNSASTASSSK), 732–750 (NTQPSGNTASVQGSTSLPA), 884–915 (TTTSSHPLNTGSISHSTLGATDGQQKSDSSFI), and 1028–1046 (GPSSTSGELNIGQGQSGTP).

As to quaternary structure, associates with the nuclear pore complex (NPC). Testis-specific in adults. In fetal brain expressed only from the paternal allele.

It is found in the nucleus. The protein localises to the nucleoplasm. The protein resides in the nucleus inner membrane. May be involved in spermatogenesis. This chain is Nuclear pore-associated protein 1 (NPAP1), found in Homo sapiens (Human).